The primary structure comprises 253 residues: Succinate dehydrogenase [ubiquinone] iron-sulfur subunit, mitochondrial (253 aa).

The 2Fe-2S ferredoxin-type domain occupies 23 to 114 (FKIYRWNPDK…TTKIYPLPHM (92 aa)). [2Fe-2S] cluster contacts are provided by C74, C79, C82, and C94. The region spanning 156-186 (DRKKLDGLYECILCACCSTSCPSYWWNQEEY) is the 4Fe-4S ferredoxin-type domain. C166, C169, and C172 together coordinate [4Fe-4S] cluster. C176 contributes to the [3Fe-4S] cluster binding site. W181 provides a ligand contact to a ubiquinone. Residues C223 and C229 each contribute to the [3Fe-4S] cluster site. A [4Fe-4S] cluster-binding site is contributed by C233.

The protein belongs to the succinate dehydrogenase/fumarate reductase iron-sulfur protein family. Component of complex II composed of four subunits: a flavoprotein (FP), an iron-sulfur protein (IP), and a cytochrome b composed of a large and a small subunit. It depends on [2Fe-2S] cluster as a cofactor. [3Fe-4S] cluster serves as cofactor. [4Fe-4S] cluster is required as a cofactor.

The protein resides in the mitochondrion inner membrane. The catalysed reaction is a quinone + succinate = fumarate + a quinol. Its pathway is carbohydrate metabolism; tricarboxylic acid cycle; fumarate from succinate (eukaryal route): step 1/1. Functionally, iron-sulfur protein (IP) subunit of succinate dehydrogenase (SDH) that is involved in complex II of the mitochondrial electron transport chain and is responsible for transferring electrons from succinate to ubiquinone (coenzyme Q). This chain is Succinate dehydrogenase [ubiquinone] iron-sulfur subunit, mitochondrial (SDH2), found in Candida glabrata (strain ATCC 2001 / BCRC 20586 / JCM 3761 / NBRC 0622 / NRRL Y-65 / CBS 138) (Yeast).